A 249-amino-acid polypeptide reads, in one-letter code: Large ribosomal subunit protein uL4 (249 aa).

The protein belongs to the universal ribosomal protein uL4 family. Part of the 50S ribosomal subunit.

In terms of biological role, one of the primary rRNA binding proteins, this protein initially binds near the 5'-end of the 23S rRNA. It is important during the early stages of 50S assembly. It makes multiple contacts with different domains of the 23S rRNA in the assembled 50S subunit and ribosome. Its function is as follows. Forms part of the polypeptide exit tunnel. The sequence is that of Large ribosomal subunit protein uL4 from Methanospirillum hungatei JF-1 (strain ATCC 27890 / DSM 864 / NBRC 100397 / JF-1).